Consider the following 309-residue polypeptide: Probable ABC transporter permease protein YesP (309 aa).

The next 6 helical transmembrane spans lie at 29–49 (FIIGFLCFTVIPMGASLFLSF), 84–104 (FTYVLAGVPLRLGFALFIAVI), 114–134 (IYRTLFYLPSIIGGSVAVAIM), 167–187 (ALWTLILLSVWQFGSSMLIFL), 217–237 (LPILTPIIFFNLVMQTISAFM), and 275–295 (YASAMAWVMLVIVGLITLILF). The 215-residue stretch at 80 to 294 (LKVTFTYVLA…VIVGLITLIL (215 aa)) folds into the ABC transmembrane type-1 domain.

It belongs to the binding-protein-dependent transport system permease family. MalFG subfamily.

It localises to the cell membrane. Functionally, part of a binding-protein-dependent transport system. Probably responsible for the translocation of the substrate across the membrane. The chain is Probable ABC transporter permease protein YesP (yesP) from Bacillus subtilis (strain 168).